The chain runs to 839 residues: MTRSPFRRLVFGTLRRLLYLWVRSETINQSSLTLNLDRSRPVFYVLQSPSLSELAVVDAECTKAGLPRPVLPVSVGPLMEPAAFFYLTPEPDWLGRQDKRGAPPTLTRLVNTLSEHAEENAQIIPVSVFWGQSPESESSPWKLLFADSWAVTGRLRRLLSILILGRKTRVQFSAPINLRELIEHNKGHERTVRMAQRILRVHFRNLKTAVIGPDLSHRRNLVKGLVNMPLVRQAIADEAEREKITPEKAKAQALRYGNEIASDYTYTAIRFLEVVLSWFWNKIYDGIKVNNIEGVQKVAQGYEVIYVPCHRSHIDYLLLSYLLFKNGLTPPHIAAGINLNMPVIGSLLRRGGAFFMRRTFKGNPLYTSVFNEYLHTLFTKGFPVEYFVEGGRSRTGRMLQPKTGMLAITLRSFLRSSRMPIVFVPVYIGYERVLEGRTYLGELRGASKKKESIFDIFKVVGALKQRFGQVAVNFGEPIKLAEFLDAEQPDWRSQELGPNYKPAWLNETTNRLGEQVARHLNEAAAVNPVNLVALALLSTTRLALDEQAMARQLDLYLALLRRVPYSPHTTLPDGDGLALIKHVKDMDLLSEQSDALGKILYLDEQNAVLMTYYRNNVLHIFALPALLASFFQSSSRMSRDQILRYTHALYPYLQSELFIRWSLDELDTVVDQWLEAFVEQGLLRFENNVYLRPAPSSRHFVLLTLLSKTVAQTLQRFYMAISLLLNSGQNSISAEELEDLCTIMAQRLSILHGLNAPEFFDKSLFRHFIQTLLEQDVLRRDEAGKLSYHDLLGELAEGAAKRVLPAEIRLSIRQVALHRVDGAAEAAVEPQPPKPEESR.

An HXXXXD motif motif is present at residues Cys309 to Ile314.

This sequence belongs to the GPAT/DAPAT family.

The protein resides in the cell inner membrane. It carries out the reaction sn-glycerol 3-phosphate + an acyl-CoA = a 1-acyl-sn-glycero-3-phosphate + CoA. The protein operates within phospholipid metabolism; CDP-diacylglycerol biosynthesis; CDP-diacylglycerol from sn-glycerol 3-phosphate: step 1/3. In Pseudomonas fluorescens (strain SBW25), this protein is Glycerol-3-phosphate acyltransferase.